The chain runs to 195 residues: Imidazoleglycerol-phosphate dehydratase (195 aa).

The protein belongs to the imidazoleglycerol-phosphate dehydratase family.

It localises to the cytoplasm. It catalyses the reaction D-erythro-1-(imidazol-4-yl)glycerol 3-phosphate = 3-(imidazol-4-yl)-2-oxopropyl phosphate + H2O. It functions in the pathway amino-acid biosynthesis; L-histidine biosynthesis; L-histidine from 5-phospho-alpha-D-ribose 1-diphosphate: step 6/9. This chain is Imidazoleglycerol-phosphate dehydratase, found in Clostridium botulinum (strain Alaska E43 / Type E3).